The primary structure comprises 98 residues: NADH-ubiquinone oxidoreductase chain 4L (98 aa).

3 helical membrane passes run 1-21 (MPYIYMNITLAFVISLIGTLM), 29-49 (SLLCLEGMLLSLFTLNALLSL), and 61-81 (LILLVFAACEAAVGLALLVMI).

It belongs to the complex I subunit 4L family. Core subunit of respiratory chain NADH dehydrogenase (Complex I) which is composed of 45 different subunits.

Its subcellular location is the mitochondrion inner membrane. It catalyses the reaction a ubiquinone + NADH + 5 H(+)(in) = a ubiquinol + NAD(+) + 4 H(+)(out). Core subunit of the mitochondrial membrane respiratory chain NADH dehydrogenase (Complex I) which catalyzes electron transfer from NADH through the respiratory chain, using ubiquinone as an electron acceptor. Part of the enzyme membrane arm which is embedded in the lipid bilayer and involved in proton translocation. This is NADH-ubiquinone oxidoreductase chain 4L (MT-ND4L) from Elephas maximus (Indian elephant).